Here is a 367-residue protein sequence, read N- to C-terminus: Dimethyladenosine transferase 1, mitochondrial (367 aa).

The N-terminal 16 residues, 1 to 16 (MASASRLPPLPALRDF), are a transit peptide targeting the mitochondrion. S-adenosyl-L-methionine contacts are provided by residues 30-33 (QNYL), Asn31, Leu33, Gly58, Glu80, Asp106, and Asn141.

The protein belongs to the class I-like SAM-binding methyltransferase superfamily. rRNA adenine N(6)-methyltransferase family. KsgA subfamily.

Its subcellular location is the mitochondrion. Its function is as follows. Probable S-adenosyl-L-methionine-dependent methyltransferase which specifically dimethylates mitochondrial 12S rRNA at the conserved stem loop. Also required for basal transcription of mitochondrial DNA. Stimulates transcription independently of the methyltransferase activity. This Caenorhabditis elegans protein is Dimethyladenosine transferase 1, mitochondrial (tfbm-1).